Consider the following 294-residue polypeptide: 3-methyl-2-oxobutanoate hydroxymethyltransferase (294 aa).

Positions 1-12 (MSASAESTNATP) are enriched in polar residues. The segment at 1-21 (MSASAESTNATPYGTLPPTAA) is disordered. Residues Asp69 and Asp112 each contribute to the Mg(2+) site. 3-methyl-2-oxobutanoate-binding positions include 69 to 70 (DS), Asp112, and Lys141. Residue Glu143 participates in Mg(2+) binding. Catalysis depends on Glu210, which acts as the Proton acceptor.

It belongs to the PanB family. In terms of assembly, homodecamer; pentamer of dimers. Mg(2+) is required as a cofactor.

The protein resides in the cytoplasm. The enzyme catalyses 3-methyl-2-oxobutanoate + (6R)-5,10-methylene-5,6,7,8-tetrahydrofolate + H2O = 2-dehydropantoate + (6S)-5,6,7,8-tetrahydrofolate. The protein operates within cofactor biosynthesis; (R)-pantothenate biosynthesis; (R)-pantoate from 3-methyl-2-oxobutanoate: step 1/2. Functionally, catalyzes the reversible reaction in which hydroxymethyl group from 5,10-methylenetetrahydrofolate is transferred onto alpha-ketoisovalerate to form ketopantoate. This chain is 3-methyl-2-oxobutanoate hydroxymethyltransferase, found in Albidiferax ferrireducens (strain ATCC BAA-621 / DSM 15236 / T118) (Rhodoferax ferrireducens).